The sequence spans 346 residues: Elongation factor Ts (346 aa).

An involved in Mg(2+) ion dislocation from EF-Tu region spans residues threonine 80–valine 83.

The protein belongs to the EF-Ts family.

The protein resides in the cytoplasm. In terms of biological role, associates with the EF-Tu.GDP complex and induces the exchange of GDP to GTP. It remains bound to the aminoacyl-tRNA.EF-Tu.GTP complex up to the GTP hydrolysis stage on the ribosome. This Streptococcus pneumoniae serotype 19F (strain G54) protein is Elongation factor Ts.